The chain runs to 359 residues: tRNA/tmRNA (uracil-C(5))-methyltransferase (359 aa).

5 residues coordinate S-adenosyl-L-methionine: glutamine 183, tyrosine 211, asparagine 216, glutamate 232, and aspartate 292. Cysteine 317 (nucleophile) is an active-site residue. Glutamate 351 (proton acceptor) is an active-site residue.

The protein belongs to the class I-like SAM-binding methyltransferase superfamily. RNA M5U methyltransferase family. TrmA subfamily.

It carries out the reaction uridine(54) in tRNA + S-adenosyl-L-methionine = 5-methyluridine(54) in tRNA + S-adenosyl-L-homocysteine + H(+). The catalysed reaction is uridine(341) in tmRNA + S-adenosyl-L-methionine = 5-methyluridine(341) in tmRNA + S-adenosyl-L-homocysteine + H(+). Functionally, dual-specificity methyltransferase that catalyzes the formation of 5-methyluridine at position 54 (m5U54) in all tRNAs, and that of position 341 (m5U341) in tmRNA (transfer-mRNA). The protein is tRNA/tmRNA (uracil-C(5))-methyltransferase of Pseudomonas fluorescens (strain ATCC BAA-477 / NRRL B-23932 / Pf-5).